An 87-amino-acid chain; its full sequence is Putative regulatory protein CHY_1489 (87 aa).

This sequence belongs to the RemA family.

This Carboxydothermus hydrogenoformans (strain ATCC BAA-161 / DSM 6008 / Z-2901) protein is Putative regulatory protein CHY_1489.